Here is a 694-residue protein sequence, read N- to C-terminus: MTRTALVTTALPYANGPLHLGHLVGYIQADIWVRARRLRGDKTWFVCADDTHGTPIMLAAEKAGVTPEAFIANIQASHERDFAAFGVTFDHYDSTNSPVNRELTEAFYAKLEAAGHISRRSVAQFYDTAKGMFLPDRYIKGICPNCGSPDQYGDNCEVCGATYAPTELKEPKSVISGATPELRDSEHFFFEVGHFDGFLREWLAGDVALPGVKAKLKEWLDAEGGLRAWDISRDAPYFGFQIPGQPGKYFYVWLDAPIGYLCSFKTLCAQMGEDFASHLVAGTQTELHHFIGKDIVNFHGLFWPAVLHGTGHRAPTRLHVNGYLTVDGAKMSKSRGTFVMARTFLDVGLEPEALRYYFAAKSSGGVDDLDLNLGDFIARVNADLVGKFVNLASRCAGFIGKRFDGKLADALPDAAQYDRFVAALAPIREAYERNDAASAIRQTMALADEANKYIDDTKPWVIAKQDGADAQLQSVCTQGLNLFRILVAALKPILPRTCAEAEAFLSAPMTSWEDVVRPLTAHTIQPYTALFTRIDPKLIDAMTDASKDTMAAPAAPATTTKPAPSKADAKPAAVANPESQTTNPGFIGMDDFAKLDLRIGKVLVCEFVEGSDKLLRFELDAGELGKRQIFSGIRASYGEPDALVGRSVVFIANLAPRKMRFGISEGMILSAGFDGGALALLDADSGAQPGMPVR.

Positions 12 to 22 match the 'HIGH' region motif; sequence PYANGPLHLGH. Zn(2+) is bound by residues cysteine 143, cysteine 146, cysteine 156, and cysteine 159. The short motif at 330 to 334 is the 'KMSKS' region element; it reads KMSKS. ATP is bound at residue lysine 333. Low complexity predominate over residues 550–573; it reads MAAPAAPATTTKPAPSKADAKPAA. The segment at 550–582 is disordered; that stretch reads MAAPAAPATTTKPAPSKADAKPAAVANPESQTT. Positions 591-694 constitute a tRNA-binding domain; the sequence is DFAKLDLRIG…SGAQPGMPVR (104 aa).

This sequence belongs to the class-I aminoacyl-tRNA synthetase family. MetG type 1 subfamily. As to quaternary structure, homodimer. It depends on Zn(2+) as a cofactor.

It localises to the cytoplasm. The enzyme catalyses tRNA(Met) + L-methionine + ATP = L-methionyl-tRNA(Met) + AMP + diphosphate. In terms of biological role, is required not only for elongation of protein synthesis but also for the initiation of all mRNA translation through initiator tRNA(fMet) aminoacylation. The chain is Methionine--tRNA ligase from Xanthomonas euvesicatoria pv. vesicatoria (strain 85-10) (Xanthomonas campestris pv. vesicatoria).